Here is a 188-residue protein sequence, read N- to C-terminus: Inosine triphosphate pyrophosphatase (188 aa).

Residue threonine 9–lysine 14 coordinates ITP. Residue glutamate 39 participates in Mg(2+) binding. ITP contacts are provided by residues lysine 51, aspartate 67–threonine 68, lysine 84, phenylalanine 143–aspartate 146, lysine 166, and histidine 171–arginine 172.

Belongs to the HAM1 NTPase family. Homodimer. Mg(2+) is required as a cofactor. It depends on Mn(2+) as a cofactor.

The protein resides in the cytoplasm. The enzyme catalyses ITP + H2O = IMP + diphosphate + H(+). It carries out the reaction dITP + H2O = dIMP + diphosphate + H(+). The catalysed reaction is XTP + H2O = XMP + diphosphate + H(+). Functionally, pyrophosphatase that hydrolyzes non-canonical purine nucleotides such as inosine triphosphate (ITP), deoxyinosine triphosphate (dITP) or xanthosine 5'-triphosphate (XTP) to their respective monophosphate derivatives. The enzyme does not distinguish between the deoxy- and ribose forms. Probably excludes non-canonical purines from RNA and DNA precursor pools, thus preventing their incorporation into RNA and DNA and avoiding chromosomal lesions. This chain is Inosine triphosphate pyrophosphatase, found in Aedes aegypti (Yellowfever mosquito).